The chain runs to 366 residues: 3-isopropylmalate dehydrogenase (366 aa).

Residue 76–89 (GPKWDANPSHLRPE) coordinates NAD(+). Substrate is bound by residues Arg96, Arg106, Arg134, and Asp219. Residues Asp219, Asp243, and Asp247 each coordinate Mg(2+). NAD(+) is bound at residue 277-289 (GSAPDIAGKGIAN).

The protein belongs to the isocitrate and isopropylmalate dehydrogenases family. LeuB type 1 subfamily. In terms of assembly, homodimer. Mg(2+) is required as a cofactor. The cofactor is Mn(2+).

The protein localises to the cytoplasm. It catalyses the reaction (2R,3S)-3-isopropylmalate + NAD(+) = 4-methyl-2-oxopentanoate + CO2 + NADH. It participates in amino-acid biosynthesis; L-leucine biosynthesis; L-leucine from 3-methyl-2-oxobutanoate: step 3/4. In terms of biological role, catalyzes the oxidation of 3-carboxy-2-hydroxy-4-methylpentanoate (3-isopropylmalate) to 3-carboxy-4-methyl-2-oxopentanoate. The product decarboxylates to 4-methyl-2 oxopentanoate. The sequence is that of 3-isopropylmalate dehydrogenase from Oceanobacillus iheyensis (strain DSM 14371 / CIP 107618 / JCM 11309 / KCTC 3954 / HTE831).